Consider the following 1196-residue polypeptide: Jouberin (1196 aa).

Residues 13–45 (KVRFEELLKTHSDLMREKKKLKKKLVRSEENIS) are a coiled coil. A Phosphoserine modification is found at serine 45. Disordered stretches follow at residues 56–186 (MKET…EEDE), 215–242 (QLTY…KEVP), and 254–327 (ISGD…HEIT). Polar residues predominate over residues 80–91 (DDVSAANTNNLK). Over residues 92–101 (KSTRVTKNKL) the composition is skewed to basic residues. Over residues 102 to 113 (RNTQLATENPNG) the composition is skewed to polar residues. Composition is skewed to basic and acidic residues over residues 141–154 (LKPE…DSTH), 166–179 (DHQK…GREE), and 224–233 (LFHDDKLSSE). Residues 141-434 (LKPETPENKV…VFNENFPYLL (294 aa)) form an interaction with HAP1 region. Positions 300–309 (KPKKTKKKTK) are enriched in basic residues. WD repeat units lie at residues 607–649 (AGER…FMRE), 652–691 (GHLN…TNTF), 695–735 (PHPS…DSAI), 742–781 (VHKS…NDLE), 797–837 (EFKG…ARKF), 841–880 (ANYR…QVAM), and 885–926 (PFKS…AQQE). Serine 1002 bears the Phosphoserine mark. An SH3 domain is found at 1051 to 1111 (DTAPTVVALY…PANHVASETL (61 aa)). Residues 1115–1196 (LPPEIKERSP…QAGRKVTLIE (82 aa)) are disordered. 2 stretches are compositionally biased toward basic and acidic residues: residues 1117 to 1136 (PEIK…KIEK) and 1161 to 1182 (THSE…DTRM). At serine 1123 the chain carries Phosphoserine.

Self-associates. Part of the tectonic-like complex (also named B9 complex). Interacts with MKS1. Interacts with NPHP1; probably as heterodimers and/or AHI1(2):NPHP1(2) heterotetramers. Interacts (via SH3 domain) with the dynamin GTPase DNM2. Interacts with HAP1; probably as AHI1(2):HAP1(2) heterotetramers. Interacts with RAB8A. Interacts with CEND1. Interacts with CTNNB1/beta-catenin. Interacts with SPATA7. Highly expressed in the most primitive normal hematopoietic cells. Expressed in brain, particularly in neurons that give rise to the crossing axons of the corticospinal tract and superior cerebellar peduncles. Expressed in kidney (renal collecting duct cells) (at protein level).

It is found in the cytoplasm. The protein resides in the cytoskeleton. Its subcellular location is the cilium basal body. It localises to the cell junction. The protein localises to the adherens junction. It is found in the microtubule organizing center. The protein resides in the centrosome. Its subcellular location is the centriole. Its function is as follows. Involved in vesicle trafficking and required for ciliogenesis, formation of primary non-motile cilium, and recruitment of RAB8A to the basal body of primary cilium. Component of the tectonic-like complex, a complex localized at the transition zone of primary cilia and acting as a barrier that prevents diffusion of transmembrane proteins between the cilia and plasma membranes. Involved in neuronal differentiation. As a positive modulator of classical Wnt signaling, may play a crucial role in ciliary signaling during cerebellum embryonic development. The sequence is that of Jouberin (AHI1) from Homo sapiens (Human).